The chain runs to 335 residues: Pyridoxal 5'-phosphate synthase subunit PdxS (335 aa).

A D-ribose 5-phosphate-binding site is contributed by aspartate 30. Lysine 87 (schiff-base intermediate with D-ribose 5-phosphate) is an active-site residue. Glycine 159 serves as a coordination point for D-ribose 5-phosphate. Position 171 (arginine 171) interacts with D-glyceraldehyde 3-phosphate. D-ribose 5-phosphate contacts are provided by residues glycine 257 and 278–279 (GS).

The protein belongs to the PdxS/SNZ family. In the presence of PdxT, forms a dodecamer of heterodimers.

The enzyme catalyses aldehydo-D-ribose 5-phosphate + D-glyceraldehyde 3-phosphate + L-glutamine = pyridoxal 5'-phosphate + L-glutamate + phosphate + 3 H2O + H(+). Its pathway is cofactor biosynthesis; pyridoxal 5'-phosphate biosynthesis. In terms of biological role, catalyzes the formation of pyridoxal 5'-phosphate from ribose 5-phosphate (RBP), glyceraldehyde 3-phosphate (G3P) and ammonia. The ammonia is provided by the PdxT subunit. Can also use ribulose 5-phosphate and dihydroxyacetone phosphate as substrates, resulting from enzyme-catalyzed isomerization of RBP and G3P, respectively. In Thermococcus kodakarensis (strain ATCC BAA-918 / JCM 12380 / KOD1) (Pyrococcus kodakaraensis (strain KOD1)), this protein is Pyridoxal 5'-phosphate synthase subunit PdxS.